A 501-amino-acid polypeptide reads, in one-letter code: LIM domain-containing protein HDR3 (501 aa).

The disordered stretch occupies residues 33–67 (GEANRRRPRVTAGEETTLWEEPVRPKKEEPPRHNN). Residues 53 to 67 (EPVRPKKEEPPRHNN) are compositionally biased toward basic and acidic residues. UIM domains are found at residues 65 to 84 (HNNE…DAKN) and 94 to 113 (ENDE…NPYQ). An LIM zinc-binding domain is found at 131–191 (RVCGGCKHEI…KLCYKELHHP (61 aa)). Residues 429–448 (YASSSSSSCRPPPSKKGGIS) form a disordered region.

In terms of assembly, interacts (via N-terminus) with GW6A (via C-terminus).

In terms of biological role, ubiquitin receptor that functions as a positive regulator of grain size and weight. Functions in the same genetic pathway as GW6A to regulate grain size. Modulates grain size in a similar manner to GW6A, by altering cell proliferation in spikelet hulls. Interacts with and enhances the ubiquitination of GW6A. This stabilizes GW6A, delays protein degradation by the 26S proteasome and enhances GW6A histone acetyltransferase activity. This is LIM domain-containing protein HDR3 from Oryza sativa subsp. japonica (Rice).